The following is a 312-amino-acid chain: MKLLSGNSNRPLSQAIAEYLDMPLTRAQVRRFADLEVFVTIDENVRGEDVFVIQSTSYPANDNLMELLICIDALKRASGKRITAVIPYFGYARQDRKTGGRTPISAKLVANLITRSGADRVLTMDLHAGQIQGFFDIPTDNLLPSRLMAEDIRRHYPMGDDLMVVSPDVGGVVRARALAKRLDDADLAIVDKRRSGPGQSEVMNIIGDVKDRRCILFDDIADSAGTLCNAAQALMAHGAKSVSAYITHGVLSGAAADRVANSVLTELVVTDSIEASDPAKACPKIRYVSCAPLIGEAIRRIANEESVSKLFD.

ATP is bound by residues 34–36 and 93–94; these read DLE and RQ. Mg(2+)-binding residues include H127 and D168. K192 is a catalytic residue. D-ribose 5-phosphate contacts are provided by residues R194, D218, and 222–226; that span reads DSAGT.

It belongs to the ribose-phosphate pyrophosphokinase family. Class I subfamily. Homohexamer. Requires Mg(2+) as cofactor.

It localises to the cytoplasm. It catalyses the reaction D-ribose 5-phosphate + ATP = 5-phospho-alpha-D-ribose 1-diphosphate + AMP + H(+). It functions in the pathway metabolic intermediate biosynthesis; 5-phospho-alpha-D-ribose 1-diphosphate biosynthesis; 5-phospho-alpha-D-ribose 1-diphosphate from D-ribose 5-phosphate (route I): step 1/1. Its function is as follows. Involved in the biosynthesis of the central metabolite phospho-alpha-D-ribosyl-1-pyrophosphate (PRPP) via the transfer of pyrophosphoryl group from ATP to 1-hydroxyl of ribose-5-phosphate (Rib-5-P). The chain is Ribose-phosphate pyrophosphokinase from Caulobacter vibrioides (strain ATCC 19089 / CIP 103742 / CB 15) (Caulobacter crescentus).